Reading from the N-terminus, the 317-residue chain is Spermidine synthase 2 (317 aa).

In terms of domain architecture, PABS spans proline 27–threonine 264. Glutamine 58 is an S-adenosyl 3-(methylsulfanyl)propylamine binding site. Tyrosine 88 contributes to the putrescine binding site. Residues glutamine 89, aspartate 113, glutamate 133, aspartate 164–glycine 165, and aspartate 183 each bind S-adenosyl 3-(methylsulfanyl)propylamine. Aspartate 183 functions as the Proton acceptor in the catalytic mechanism. Residues aspartate 183–aspartate 186 and tyrosine 252 contribute to the putrescine site.

This sequence belongs to the spermidine/spermine synthase family.

It carries out the reaction S-adenosyl 3-(methylsulfanyl)propylamine + putrescine = S-methyl-5'-thioadenosine + spermidine + H(+). The protein operates within amine and polyamine biosynthesis; spermidine biosynthesis; spermidine from putrescine: step 1/1. This chain is Spermidine synthase 2, found in Datura stramonium (Jimsonweed).